The sequence spans 161 residues: Bacterioferritin (161 aa).

The Ferritin-like diiron domain maps to 1–145; that stretch reads MKGEPKVIER…TQLDLLAKIG (145 aa). Fe cation is bound by residues Glu18 and Glu51. Met52 contacts heme b. Fe cation contacts are provided by His54, Glu94, Glu127, and His130.

It belongs to the bacterioferritin family. Homooligomer of 24 subunits, arranged as 12 dimers, that are packed together to form an approximately spherical molecule with a central cavity, in which large amounts of iron can be deposited. Heme b is required as a cofactor.

It carries out the reaction 4 Fe(2+) + O2 + 4 H(+) = 4 Fe(3+) + 2 H2O. It catalyses the reaction Fe(2+)(in) = Fe(2+)(out). Functionally, iron-storage protein, whose ferroxidase center binds Fe(2+), oxidizes it using dioxygen to Fe(3+), and participates in the subsequent Fe(3+) oxide mineral core formation within the central cavity of the BFR protein shell. The protein is Bacterioferritin (bfr) of Brucella melitensis biotype 1 (strain ATCC 23456 / CCUG 17765 / NCTC 10094 / 16M).